A 471-amino-acid polypeptide reads, in one-letter code: Nuclear receptor subfamily 0 group B member 1 (471 aa).

Tandem repeats lie at residues 1 to 67 (MAGE…YRCC), 68 to 134 (FCGE…YRCC), and 135 to 201 (FCGE…YRCC). The tract at residues 1–253 (MAGEDHQWQG…QRVALKSPQV (253 aa)) is 4 X 67 AA tandem repeats. 3 short sequence motifs (LXXLL motif) span residues 13–17 (LYNML), 80–84 (LYNML), and 147–151 (LYSLL). The stretch at 202-253 (FCGEDHPRQSGILCNMPMSAKQTHVAPEAQPGAPWWDPSCAAQRVALKSPQV) is one 4; truncated repeat. One can recognise an NR LBD domain in the interval 210 to 470 (QSGILCNMPM…DMMLEMLCAK (261 aa)). An AF-2 motif motif is present at residues 462-467 (MMLEML).

This sequence belongs to the nuclear hormone receptor family. NR0 subfamily. As to quaternary structure, homodimer. Interacts with NR5A1, NR5A2, NR0B2 and with COPS2. Interacts with ESRRB; represses ESRRB activity at the GATA6 promoter.

It localises to the nucleus. The protein resides in the cytoplasm. Its function is as follows. Nuclear receptor that lacks a DNA-binding domain and acts as a corepressor that inhibits the transcriptional activity of other nuclear receptors through heterodimeric interactions. Component of a cascade required for the development of the hypothalamic-pituitary-adrenal-gonadal axis. May also have a role in the development of the embryo and in the maintenance of embryonic stem cell pluripotency. The chain is Nuclear receptor subfamily 0 group B member 1 (NR0B1) from Sus scrofa (Pig).